Here is a 370-residue protein sequence, read N- to C-terminus: Probable aspartic-type endopeptidase ARB_04018 (370 aa).

The first 21 residues, 1 to 21 (MWHSPFSTAFTLFLGFFTLTL), serve as a signal peptide directing secretion. N-linked (GlcNAc...) asparagine glycosylation is found at Asn-80 and Asn-102. Residues 94–367 (FVNEITIGND…DHDGPKMGFA (274 aa)) enclose the Peptidase A1 domain. Asp-110 is an active-site residue. Residue Asn-251 is glycosylated (N-linked (GlcNAc...) asparagine). Asp-261 is an active-site residue. N-linked (GlcNAc...) asparagine glycosylation occurs at Asn-298.

It belongs to the peptidase A1 family.

It localises to the secreted. Probable aspartic-type endopeptidase which contributes to virulence. The chain is Probable aspartic-type endopeptidase ARB_04018 from Arthroderma benhamiae (strain ATCC MYA-4681 / CBS 112371) (Trichophyton mentagrophytes).